Consider the following 375-residue polypeptide: N-acetylneuraminate epimerase (375 aa).

A signal peptide spans 1–22; the sequence is MKLTKTALCTALFATFTFSANA. 7 Kelch repeats span residues 43-87, 89-140, 142-176, 177-222, 225-273, 295-344, and 346-375; these read TVYV…AAVD, KLYV…ASHG, KVYI…EIAA, AYFD…TIQG, LVVV…LAGA, KQYK…SYNN, and VLLI…LTIE. The Proton acceptor role is filled by glutamate 231.

Belongs to the NanM family. Homodimer.

Its subcellular location is the periplasm. It catalyses the reaction N-acetyl-alpha-neuraminate = N-acetyl-beta-neuraminate. Functionally, converts alpha-N-acetylneuranimic acid (Neu5Ac) to the beta-anomer, accelerating the equilibrium between the alpha- and beta-anomers. Probably facilitates sialidase-negative bacteria to compete successfully for limited amounts of extracellular Neu5Ac, which is likely taken up in the beta-anomer. In addition, the rapid removal of sialic acid from solution might be advantageous to the bacterium to damp down host responses. The polypeptide is N-acetylneuraminate epimerase (Haemophilus influenzae (strain PittEE)).